The chain runs to 436 residues: MSELQQVRNAKGDRIAIVMGLRTPFAKQATAFHGVSALDMGKMVVNELLSRSELDPKEIEQLVYGQVVQMPAAPNIAREIVLGTGMNVSTDAYSVTRACATSFQSTVNVAESIMTGNIEIGIAGGADSSSVLPIGVSKKLAHALVDLNKARSFGQKWAIIRRLGLKDLLPVPPAVAEYSTGLSMGQTAEQMAKTYNISRADQDALAHRSHTLATETWDSGHLRDEVMVAHVPPYKSFIDRDNNIRENSSLDSYAKLRPAFDRKHGSVTAANSTPLTDGASAVLLMSESRAKALGYEPIGYIKSYAFSAIDVWQDMLMGPSYATPLALKRAGMELEDLTLIEMHEAFAAQTLANMQMFASKKFAKEKLGRDRAIGEIDMTKFNVLGGSLAYGHPFAATGTRLITQVCRELKRRGGGTGLATACAAGGLGAAMIVEVE.

C99 (acyl-thioester intermediate) is an active-site residue. Catalysis depends on proton acceptor residues H392 and C422.

The protein belongs to the thiolase-like superfamily. Thiolase family. In terms of assembly, heterotetramer of two alpha chains (FadJ) and two beta chains (FadI).

The protein localises to the cytoplasm. It catalyses the reaction an acyl-CoA + acetyl-CoA = a 3-oxoacyl-CoA + CoA. Its pathway is lipid metabolism; fatty acid beta-oxidation. Catalyzes the final step of fatty acid oxidation in which acetyl-CoA is released and the CoA ester of a fatty acid two carbons shorter is formed. This chain is 3-ketoacyl-CoA thiolase, found in Shewanella loihica (strain ATCC BAA-1088 / PV-4).